A 1254-amino-acid polypeptide reads, in one-letter code: DNA-directed RNA polymerase subunit beta' (1254 aa).

Positions 59, 61, 76, and 79 each coordinate Zn(2+). Mg(2+)-binding residues include Asp-501, Asp-503, and Asp-505. Residues Cys-871, Cys-946, Cys-953, and Cys-956 each coordinate Zn(2+).

It belongs to the RNA polymerase beta' chain family. In terms of assembly, the RNAP catalytic core consists of 2 alpha, 1 beta, 1 beta' and 1 omega subunit. When a sigma factor is associated with the core the holoenzyme is formed, which can initiate transcription. It depends on Mg(2+) as a cofactor. Requires Zn(2+) as cofactor.

The catalysed reaction is RNA(n) + a ribonucleoside 5'-triphosphate = RNA(n+1) + diphosphate. In terms of biological role, DNA-dependent RNA polymerase catalyzes the transcription of DNA into RNA using the four ribonucleoside triphosphates as substrates. The chain is DNA-directed RNA polymerase subunit beta' from Mesoplasma florum (strain ATCC 33453 / NBRC 100688 / NCTC 11704 / L1) (Acholeplasma florum).